The chain runs to 421 residues: ATP-dependent RNA helicase RhlB (421 aa).

The Q motif motif lies at 9 to 37 (QKFSDFALHPKVVEALEKKGFHNCTPIQA). A Helicase ATP-binding domain is found at 40-219 (LPLTLAGRDV…FEQMNNAEYI (180 aa)). 53–60 (AQTGTGKT) serves as a coordination point for ATP. The short motif at 165-168 (DEAD) is the DEAD box element. The Helicase C-terminal domain occupies 245–390 (RLLQTLIEEE…VSKYNPDALM (146 aa)). The segment at 395–421 (KPLRLTRARTGNGPRRTGAPRNRRRSG) is disordered. The segment covering 402–414 (ARTGNGPRRTGAP) has biased composition (low complexity).

Belongs to the DEAD box helicase family. RhlB subfamily. Component of the RNA degradosome, which is a multiprotein complex involved in RNA processing and mRNA degradation.

It is found in the cytoplasm. The catalysed reaction is ATP + H2O = ADP + phosphate + H(+). DEAD-box RNA helicase involved in RNA degradation. Has RNA-dependent ATPase activity and unwinds double-stranded RNA. In Shigella flexneri serotype 5b (strain 8401), this protein is ATP-dependent RNA helicase RhlB.